Consider the following 510-residue polypeptide: Beta-glucosidase 12 (510 aa).

The N-terminal stretch at 1-24 is a signal peptide; that stretch reads MAAAGAMPGGLLLTFLLLAVVASG. Gln-53 lines the a beta-D-glucoside pocket. N-linked (GlcNAc...) asparagine glycosylation occurs at Asn-122. Residues His-157 and 202-203 contribute to the a beta-D-glucoside site; that span reads NE. Catalysis depends on Glu-203, which acts as the Proton donor. Disulfide bonds link Cys-208–Cys-243 and Cys-222–Cys-230. A glycan (N-linked (GlcNAc...) asparagine) is linked at Asn-229. Tyr-346 is a binding site for a beta-D-glucoside. 2 N-linked (GlcNAc...) asparagine glycosylation sites follow: Asn-361 and Asn-371. Glu-417 serves as a coordination point for a beta-D-glucoside. The active-site Nucleophile is the Glu-417. Asn-425 carries an N-linked (GlcNAc...) asparagine glycan. Residues Trp-466, 473-474, and Phe-482 each bind a beta-D-glucoside; that span reads EW.

It belongs to the glycosyl hydrolase 1 family.

The protein resides in the secreted. It carries out the reaction Hydrolysis of terminal, non-reducing beta-D-glucosyl residues with release of beta-D-glucose.. Hydrolyzes p-nitrophenyl beta-D-glucoside, p-nitrophenyl beta-D-galactoside, p-nitrophenyl beta-D-xyloside, p-nitrophenyl beta-D-fucoside, p-nitrophenyl beta-L-arabinoside, cello-oligosaccharides and laminaribiose. This is Beta-glucosidase 12 from Oryza sativa subsp. indica (Rice).